Consider the following 61-residue polypeptide: Small ribosomal subunit protein uS14 (61 aa).

The Zn(2+) site is built by C24, C27, C40, and C43.

This sequence belongs to the universal ribosomal protein uS14 family. Zinc-binding uS14 subfamily. Part of the 30S ribosomal subunit. Contacts proteins S3 and S10. Requires Zn(2+) as cofactor.

Functionally, binds 16S rRNA, required for the assembly of 30S particles and may also be responsible for determining the conformation of the 16S rRNA at the A site. This chain is Small ribosomal subunit protein uS14, found in Kosmotoga olearia (strain ATCC BAA-1733 / DSM 21960 / TBF 19.5.1).